A 162-amino-acid polypeptide reads, in one-letter code: Anaerobic nitrite reductase (162 aa).

The residue at position 2 (serine 2) is an N-acetylserine. The Globin domain occupies 9–158 (VFTEEQEALV…LVAAIKFEMK (150 aa)). The Homodimerization signature appears at 42–46 (EIAPS). Heme b-binding residues include serine 52, lysine 66, histidine 70, arginine 100, and histidine 105. Residues 112 to 124 (NEHFEVTRFALLE) carry the Homodimerization motif.

The protein belongs to the plant globin family. Homodimer with distinct heme coordination in each subunits. Heme b is required as a cofactor. Root nodules.

The protein localises to the cytoplasm. Its subcellular location is the nucleus. The enzyme catalyses Fe(III)-heme b-[protein] + nitric oxide + H2O = Fe(II)-heme b-[protein] + nitrite + 2 H(+). Phytoglobin that reduces nitrite to nitric oxide (NO) under anoxic conditions (e.g. during flooding or in waterlogged soil) and upon root nodulation. Required for general plant development and during nodulation, especially for the onset of symbiosis. Monitors nitric oxide (NO) levels during early phase of the nitrogen-fixing symbiosis and buffers oxygen in functioning nodules. May not function as an oxygen storage or transport protein. Has an unusually high affinity for O(2) through a hexacoordinate heme iron because of a very low dissociation constant. In Parasponia andersonii (Sponia andersonii), this protein is Anaerobic nitrite reductase.